Consider the following 473-residue polypeptide: Glycosyl hydrolase family 109 protein 2 (473 aa).

Residues 1-31 constitute a signal peptide (tat-type signal); the sequence is MSIFSSRRQFLKSLGLAAGAAAAGNALPGKA. Residues 77 to 78, Asp99, 148 to 151, 168 to 169, and Asn197 contribute to the NAD(+) site; these read GR, WSSH, and EV. Substrate-binding positions include Tyr226, Arg244, 256-259, and Tyr339; that span reads YPTH. Residue Tyr256 coordinates NAD(+).

It belongs to the Gfo/Idh/MocA family. Glycosyl hydrolase 109 subfamily. It depends on NAD(+) as a cofactor. In terms of processing, predicted to be exported by the Tat system. The position of the signal peptide cleavage has not been experimentally proven.

Its function is as follows. Glycosidase. The sequence is that of Glycosyl hydrolase family 109 protein 2 from Akkermansia muciniphila (strain ATCC BAA-835 / DSM 22959 / JCM 33894 / BCRC 81048 / CCUG 64013 / CIP 107961 / Muc).